We begin with the raw amino-acid sequence, 379 residues long: Armadillo repeat-containing X-linked protein 3 (379 aa).

The Mitochondrial intermembrane segment spans residues 1-6; that stretch reads MGYARK. Mitochondrion outer membrane (MOM)-targeting sequence stretches follow at residues 1–6 and 26–37; these read MGYARK and RLTRGRKQNKEK. The helical; Signal-anchor transmembrane segment at 7–29 threads the bilayer; that stretch reads VGWVTAGLVIGAGACYCIYRLTR. The Cytoplasmic portion of the chain corresponds to 30 to 379; it reads GRKQNKEKMA…TERMFPKSQE (350 aa). The tract at residues 34–69 is disordered; it reads NKEKMAEGGPGDVEDAGDCSGARYNDWSDDDDDSNE. Ser61, Ser67, and Ser72 each carry phosphoserine. Positions 89 to 98 are nuclear localization signal; it reads RARARARARA. Ser110 carries the phosphoserine modification. 3 ARM repeats span residues 111–151, 153–192, and 233–272; these read PNSD…NNAA, AFNRDIIRDLGGLPIVAKILNTRDPIVKEKALIVLNNLSV, and VTNEYQHILANSISDFFRLFSAGNEETKLQVLKLLLNLAE.

The protein belongs to the eutherian X-chromosome-specific Armcx family. In terms of assembly, interacts (via ARM domain) with MIRO1, MIRO2 and TRAK2. The interaction with Miro is calcium-dependent. Interacts with Sox10.

It is found in the mitochondrion outer membrane. The protein localises to the cytoplasm. Its subcellular location is the nucleus. Regulates mitochondrial aggregation and transport in axons in living neurons. May link mitochondria to the Trak2-kinesin motor complex via its interaction with Miro and Trak2. Mitochondrial distribution and dynamics is regulated through Armcx3 protein degradation, which is promoted by PCK and negatively regulated by Wnt1. Enhances the Sox10-mediated transactivation of the neuronal acetylcholine receptor subunit alpha-3 and beta-4 subunit gene promoters. The polypeptide is Armadillo repeat-containing X-linked protein 3 (Armcx3) (Rattus norvegicus (Rat)).